A 368-amino-acid polypeptide reads, in one-letter code: Protein-glutamate methylesterase/protein-glutamine glutaminase (368 aa).

The Response regulatory domain maps to 9-126; that stretch reads RVLVVDDSAF…SINMRELKDE (118 aa). Residue D60 is modified to 4-aspartylphosphate. In terms of domain architecture, CheB-type methylesterase spans 161–354; sequence SVPARIAVAI…ETVVRAVEMI (194 aa). Active-site residues include S173, H200, and D296.

The protein belongs to the CheB family. In terms of processing, phosphorylated by CheA. Phosphorylation of the N-terminal regulatory domain activates the methylesterase activity.

Its subcellular location is the cytoplasm. The enzyme catalyses [protein]-L-glutamate 5-O-methyl ester + H2O = L-glutamyl-[protein] + methanol + H(+). The catalysed reaction is L-glutaminyl-[protein] + H2O = L-glutamyl-[protein] + NH4(+). Functionally, involved in chemotaxis. Part of a chemotaxis signal transduction system that modulates chemotaxis in response to various stimuli. Catalyzes the demethylation of specific methylglutamate residues introduced into the chemoreceptors (methyl-accepting chemotaxis proteins or MCP) by CheR. Also mediates the irreversible deamidation of specific glutamine residues to glutamic acid. The polypeptide is Protein-glutamate methylesterase/protein-glutamine glutaminase (Pyrococcus abyssi (strain GE5 / Orsay)).